The sequence spans 398 residues: T-box transcription factor TBX1 (398 aa).

Positions 23-72 (AAGGFPGAASPGADPYGPREPPPPPPRYDPCAAAAPGAPGPPPPPHAYPF) are disordered. The segment covering 29-38 (GAASPGADPY) has biased composition (low complexity). 2 stretches are compositionally biased toward pro residues: residues 40 to 50 (PREPPPPPPRY) and 60 to 69 (APGPPPPPHA). The T-box DNA-binding region spans 119–297 (LWDEFNQLGT…SNPFAKGFRD (179 aa)).

As to quaternary structure, binds DNA as a dimer. Interacts with DSCR6. Interacts with NKX2-5.

It localises to the nucleus. Its function is as follows. Transcription factor that plays a key role in cardiovascular development by promoting pharyngeal arch segmentation during embryonic development. Also involved in craniofacial muscle development. Together with NKX2-5, acts as a regulator of asymmetric cardiac morphogenesis by promoting expression of PITX2. Acts upstream of TBX1 for the formation of the thymus and parathyroid glands from the third pharyngeal pouch. Required for hair follicle stem cell self-renewal. Binds to the palindromic T site 5'-TTCACACCTAGGTGTGAA-3' DNA sequence. The chain is T-box transcription factor TBX1 from Homo sapiens (Human).